Reading from the N-terminus, the 98-residue chain is NADH-ubiquinone oxidoreductase chain 4L (98 aa).

A run of 3 helical transmembrane segments spans residues 1–21, 29–49, and 61–81; these read MTLV…GLLM, SLLC…VTIL, and IILL…LVMV.

This sequence belongs to the complex I subunit 4L family. In terms of assembly, core subunit of respiratory chain NADH dehydrogenase (Complex I) which is composed of 45 different subunits.

The protein localises to the mitochondrion inner membrane. It carries out the reaction a ubiquinone + NADH + 5 H(+)(in) = a ubiquinol + NAD(+) + 4 H(+)(out). In terms of biological role, core subunit of the mitochondrial membrane respiratory chain NADH dehydrogenase (Complex I) which catalyzes electron transfer from NADH through the respiratory chain, using ubiquinone as an electron acceptor. Part of the enzyme membrane arm which is embedded in the lipid bilayer and involved in proton translocation. The protein is NADH-ubiquinone oxidoreductase chain 4L (MT-ND4L) of Rousettus aegyptiacus (Egyptian fruit bat).